Consider the following 419-residue polypeptide: Tyrosine--tRNA ligase 2 (419 aa).

Y34 lines the L-tyrosine pocket. Positions 39–48 match the 'HIGH' region motif; it reads PTGDSMHIGH. Residues Y168 and Q172 each contribute to the L-tyrosine site. The 'KMSKS' region signature appears at 230–234; sequence KFGKS. ATP is bound at residue K233. The region spanning 352–418 is the S4 RNA-binding domain; that stretch reads KNIVEWLVDL…GKKNYSLVKL (67 aa).

Belongs to the class-I aminoacyl-tRNA synthetase family. TyrS type 1 subfamily. In terms of assembly, homodimer.

The protein resides in the cytoplasm. It catalyses the reaction tRNA(Tyr) + L-tyrosine + ATP = L-tyrosyl-tRNA(Tyr) + AMP + diphosphate + H(+). Functionally, catalyzes the attachment of tyrosine to tRNA(Tyr) in a two-step reaction: tyrosine is first activated by ATP to form Tyr-AMP and then transferred to the acceptor end of tRNA(Tyr). The chain is Tyrosine--tRNA ligase 2 from Bacillus cereus (strain ZK / E33L).